Reading from the N-terminus, the 421-residue chain is Cell division protein FtsZ (421 aa).

Residues 26–30 (GGGGN), 132–134 (GTG), Glu-163, Arg-167, and Asn-211 contribute to the GTP site.

Belongs to the FtsZ family. In terms of assembly, homodimer. Polymerizes to form a dynamic ring structure in a strictly GTP-dependent manner. Interacts directly with several other division proteins.

Its subcellular location is the cytoplasm. Functionally, essential cell division protein that forms a contractile ring structure (Z ring) at the future cell division site. The regulation of the ring assembly controls the timing and the location of cell division. One of the functions of the FtsZ ring is to recruit other cell division proteins to the septum to produce a new cell wall between the dividing cells. Binds GTP and shows GTPase activity. The polypeptide is Cell division protein FtsZ (Haemophilus influenzae (strain ATCC 51907 / DSM 11121 / KW20 / Rd)).